The chain runs to 404 residues: 8-amino-7-oxononanoate synthase (404 aa).

Residue Arg-20 participates in substrate binding. 116–117 (GY) contacts pyridoxal 5'-phosphate. His-141 contacts substrate. Ser-187, His-215, and Thr-243 together coordinate pyridoxal 5'-phosphate. Lys-246 carries the N6-(pyridoxal phosphate)lysine modification. Thr-366 provides a ligand contact to substrate.

Belongs to the class-II pyridoxal-phosphate-dependent aminotransferase family. BioF subfamily. As to quaternary structure, homodimer. It depends on pyridoxal 5'-phosphate as a cofactor.

It carries out the reaction 6-carboxyhexanoyl-[ACP] + L-alanine + H(+) = (8S)-8-amino-7-oxononanoate + holo-[ACP] + CO2. Its pathway is cofactor biosynthesis; biotin biosynthesis. In terms of biological role, catalyzes the decarboxylative condensation of pimeloyl-[acyl-carrier protein] and L-alanine to produce 8-amino-7-oxononanoate (AON), [acyl-carrier protein], and carbon dioxide. In Cupriavidus necator (strain ATCC 17699 / DSM 428 / KCTC 22496 / NCIMB 10442 / H16 / Stanier 337) (Ralstonia eutropha), this protein is 8-amino-7-oxononanoate synthase.